The sequence spans 245 residues: Aquaporin SIP1-1 (245 aa).

Transmembrane regions (helical) follow at residues Ala-14–Val-34 and Leu-55–Phe-75. The NPA 1 signature appears at Asn-76 to Thr-78. 3 helical membrane passes run Phe-100–Ala-120, Gly-138–Val-158, and Val-164–Glu-184. An NPA 2 motif is present at residues Asn-191 to Ala-193. Residues Val-213–Phe-233 form a helical membrane-spanning segment.

It belongs to the MIP/aquaporin (TC 1.A.8) family. SIP (TC 1.A.8.10) subfamily.

It localises to the membrane. Functionally, aquaporins facilitate the transport of water and small neutral solutes across cell membranes. The chain is Aquaporin SIP1-1 (SIP1-1) from Zea mays (Maize).